Consider the following 220-residue polypeptide: dITP/XTP pyrophosphatase (220 aa).

13 to 18 (SHNAGK) contributes to the substrate binding site. Residues D45 and D74 each coordinate Mg(2+). D74 serves as the catalytic Proton acceptor. Substrate is bound by residues S75, 163-166 (FGYD), K186, and 199-200 (HR).

This sequence belongs to the HAM1 NTPase family. As to quaternary structure, homodimer. The cofactor is Mg(2+).

It catalyses the reaction XTP + H2O = XMP + diphosphate + H(+). The catalysed reaction is dITP + H2O = dIMP + diphosphate + H(+). It carries out the reaction ITP + H2O = IMP + diphosphate + H(+). Pyrophosphatase that catalyzes the hydrolysis of nucleoside triphosphates to their monophosphate derivatives, with a high preference for the non-canonical purine nucleotides XTP (xanthosine triphosphate), dITP (deoxyinosine triphosphate) and ITP. Seems to function as a house-cleaning enzyme that removes non-canonical purine nucleotides from the nucleotide pool, thus preventing their incorporation into DNA/RNA and avoiding chromosomal lesions. The sequence is that of dITP/XTP pyrophosphatase from Brucella melitensis biotype 1 (strain ATCC 23456 / CCUG 17765 / NCTC 10094 / 16M).